Here is a 389-residue protein sequence, read N- to C-terminus: Phosphoglycerate kinase (389 aa).

Substrate contacts are provided by residues 21-23 (DLN), R36, 59-62 (HLGR), R112, and R145. Residues K196, E313, and 342–345 (GGDT) each bind ATP.

Belongs to the phosphoglycerate kinase family. In terms of assembly, monomer.

The protein localises to the cytoplasm. It catalyses the reaction (2R)-3-phosphoglycerate + ATP = (2R)-3-phospho-glyceroyl phosphate + ADP. It functions in the pathway carbohydrate degradation; glycolysis; pyruvate from D-glyceraldehyde 3-phosphate: step 2/5. This Mannheimia succiniciproducens (strain KCTC 0769BP / MBEL55E) protein is Phosphoglycerate kinase.